The sequence spans 274 residues: Diaminopimelate epimerase (274 aa).

The substrate site is built by Asn-11, Gln-44, and Asn-64. Residue Cys-73 is the Proton donor of the active site. Substrate-binding positions include 74–75 (GN), Asn-157, Asn-190, and 208–209 (ER). The active-site Proton acceptor is Cys-217. Substrate is bound at residue 218–219 (GS).

It belongs to the diaminopimelate epimerase family. As to quaternary structure, homodimer.

The protein localises to the cytoplasm. It catalyses the reaction (2S,6S)-2,6-diaminopimelate = meso-2,6-diaminopimelate. Its pathway is amino-acid biosynthesis; L-lysine biosynthesis via DAP pathway; DL-2,6-diaminopimelate from LL-2,6-diaminopimelate: step 1/1. In terms of biological role, catalyzes the stereoinversion of LL-2,6-diaminopimelate (L,L-DAP) to meso-diaminopimelate (meso-DAP), a precursor of L-lysine and an essential component of the bacterial peptidoglycan. This is Diaminopimelate epimerase from Photorhabdus laumondii subsp. laumondii (strain DSM 15139 / CIP 105565 / TT01) (Photorhabdus luminescens subsp. laumondii).